The chain runs to 447 residues: Phosphoglucosamine mutase (447 aa).

Ser103 functions as the Phosphoserine intermediate in the catalytic mechanism. Mg(2+) is bound by residues Ser103, Asp242, Asp244, and Asp246. The residue at position 103 (Ser103) is a Phosphoserine.

Belongs to the phosphohexose mutase family. The cofactor is Mg(2+). In terms of processing, activated by phosphorylation.

The catalysed reaction is alpha-D-glucosamine 1-phosphate = D-glucosamine 6-phosphate. Functionally, catalyzes the conversion of glucosamine-6-phosphate to glucosamine-1-phosphate. This chain is Phosphoglucosamine mutase, found in Paracoccus denitrificans (strain Pd 1222).